Consider the following 324-residue polypeptide: Glutathione synthetase (324 aa).

The region spanning 133 to 317 (KMYALQFTKA…LAHQVIQWVE (185 aa)) is the ATP-grasp domain. Residue 159-215 (VEAKGATVLKPLGNKAGEGILFLQAGDRNFNSIVELSTQQGRLPVMVQTYLPEAKEG) coordinates ATP. Mg(2+) is bound by residues Glu288 and Asn290.

The protein belongs to the prokaryotic GSH synthase family. Mg(2+) is required as a cofactor. Mn(2+) serves as cofactor.

It catalyses the reaction gamma-L-glutamyl-L-cysteine + glycine + ATP = glutathione + ADP + phosphate + H(+). It participates in sulfur metabolism; glutathione biosynthesis; glutathione from L-cysteine and L-glutamate: step 2/2. The polypeptide is Glutathione synthetase (Nostoc sp. (strain PCC 7120 / SAG 25.82 / UTEX 2576)).